A 546-amino-acid polypeptide reads, in one-letter code: Casein kinase I homolog 2 (546 aa).

Polar residues-rich tracts occupy residues Met1–Arg33 and His44–Asn55. Positions Met1–Asp67 are disordered. Ser2 carries the post-translational modification N-acetylserine. The Protein kinase domain occupies Tyr76–Met360. Residues Ile82–Leu90 and Lys105 each bind ATP. The active-site Proton acceptor is the Asp195. Disordered regions lie at residues Asn373 to Ala425 and Gln443 to Cys546. Residues Gln412–Ala425 are compositionally biased toward low complexity. Positions Asp453 to Lys465 are enriched in basic and acidic residues. Ser455 carries the post-translational modification Phosphoserine. Lys465 participates in a covalent cross-link: Glycyl lysine isopeptide (Lys-Gly) (interchain with G-Cter in ubiquitin). The segment covering Gln475 to Gln496 has biased composition (low complexity). Over residues Phe497–Arg530 the composition is skewed to polar residues. Residues Asn533 to Cys546 show a composition bias toward low complexity. S-palmitoyl cysteine attachment occurs at residues Cys545 and Cys546.

This sequence belongs to the protein kinase superfamily. CK1 Ser/Thr protein kinase family. Casein kinase I subfamily. Post-translationally, palmitoylated by AKR1, which is required for proper plasma membrane localization of YCK2.

Its subcellular location is the cell membrane. The enzyme catalyses L-seryl-[protein] + ATP = O-phospho-L-seryl-[protein] + ADP + H(+). It carries out the reaction L-threonyl-[protein] + ATP = O-phospho-L-threonyl-[protein] + ADP + H(+). Its function is as follows. Casein kinases are operationally defined by their preferential utilization of acidic proteins such as caseins as substrates. The protein is Casein kinase I homolog 2 (YCK2) of Saccharomyces cerevisiae (strain ATCC 204508 / S288c) (Baker's yeast).